Reading from the N-terminus, the 786-residue chain is Elastin (786 aa).

A signal peptide spans 1 to 26 (MAGLTAAAPRPGVLLLLLSILHPSRP). Pro-34 is modified (hydroxyproline). Pro-65, Pro-67, and Pro-88 each carry hydroxyproline; partial. An allysine mark is found at Lys-104 and Lys-107. Pro-116 carries the 4-hydroxyproline; partial modification. Residues Pro-156, Pro-167, Pro-170, and Pro-177 each carry the hydroxyproline; partial modification. Pro-190 carries the post-translational modification 4-hydroxyproline; partial. Allysine occurs at positions 241, 261, and 265. Pro-283 and Pro-286 each carry 4-hydroxyproline; partial. Residue Pro-290 is modified to Hydroxyproline; partial. Lys-312 and Lys-315 each carry allysine. 4-hydroxyproline; partial occurs at positions 327, 342, and 347. 2 positions are modified to hydroxyproline; partial: Pro-352 and Pro-355. 4-hydroxyproline; partial is present on Pro-360. Residues Lys-375, Lys-379, and Lys-382 each carry the allysine modification. Position 415 is a 4-hydroxyproline; partial (Pro-415). At Pro-421 the chain carries Hydroxyproline; partial. At Pro-427 the chain carries 4-hydroxyproline; partial. Lys-448 and Lys-451 each carry allysine. The residue at position 465 (Pro-465) is a Hydroxyproline; partial. Position 481 is a 4-hydroxyproline; partial (Pro-481). Residues Lys-492 and Lys-496 each carry the allysine modification. A hydroxyproline; partial mark is found at Pro-522 and Pro-550. Residues Lys-558, Lys-562, and Lys-566 each carry the allysine modification. 4-hydroxyproline; partial is present on Pro-580. 4-hydroxyproline occurs at positions 589 and 598. Pro-607 is modified (4-hydroxyproline; partial). The segment at 615–645 (EGVRRSLSPELREGDPSSSQHLPSTPSSPRV) is disordered. Residues 630–645 (PSSSQHLPSTPSSPRV) are compositionally biased toward low complexity. A Hydroxyproline; partial modification is found at Pro-646. 2 positions are modified to allysine: Lys-653 and Lys-656. A 4-hydroxyproline; partial modification is found at Pro-677. Residues Lys-693, Lys-697, Lys-735, and Lys-738 each carry the allysine modification. Pro-769 and Pro-772 each carry hydroxyproline; partial. Cys-776 and Cys-781 are joined by a disulfide.

The protein belongs to the elastin family. As to quaternary structure, the polymeric elastin chains are cross-linked together into an extensible 3D network. Forms a ternary complex with BGN and MFAP2. Interacts with MFAP2 via divalent cations (calcium &gt; magnesium &gt; manganese) in a dose-dependent and saturating manner. Interacts with FBLN5. Interacts with FBN1. Forms a ternary complex with FBN1 and FBLN2 or FBLN5. Interacts with MFAP4 in a Ca (2+)-dependent manner; this interaction promotes ELN self-assembly. Interacts with EFEMP2 with moderate affinity. In terms of processing, elastin is formed through the cross-linking of its soluble precursor tropoelastin. Cross-linking is initiated through the action of lysyl oxidase on exposed lysines to form allysine. Subsequent spontaneous condensation reactions with other allysine or unmodified lysine residues result in various bi-, tri-, and tetrafunctional cross-links. The most abundant cross-links in mature elastin fibers are lysinonorleucine, allysine aldol, desmosine, and isodesmosine. Hydroxylation on proline residues within the sequence motif, GXPG, is most likely 4-hydroxy as this fits the requirement for 4-hydroxylation in vertebrates. In terms of tissue distribution, expressed within the outer myometrial smooth muscle and throughout the arteriolar tree of uterus (at protein level). Also expressed in the large arteries, lung and skin.

It localises to the secreted. The protein localises to the extracellular space. The protein resides in the extracellular matrix. In terms of biological role, major structural protein of tissues such as aorta and nuchal ligament, which must expand rapidly and recover completely. Molecular determinant of the late arterial morphogenesis, stabilizing arterial structure by regulating proliferation and organization of vascular smooth muscle. The protein is Elastin (ELN) of Homo sapiens (Human).